Here is a 242-residue protein sequence, read N- to C-terminus: TGACG-sequence-specific DNA-binding protein TGA-1B (242 aa).

The interval 1–125 (EFCDFSGNQA…HSSPNFENNS (125 aa)) is disordered. Polar residues predominate over residues 18–45 (DTSSPELRQSSSGSDVLNATSSTSSHQV). The span at 66–79 (EGSRESANDNKGLG) shows a compositional bias: basic and acidic residues. Residues 88-125 (SPESQGSGNYGSNVSEGLNYPSDSNKSVHSSPNFENNS) are compositionally biased toward polar residues. A bZIP domain is found at 183-242 (DEKKRARLVRNRESAQLSRQRKKHYVEELEDKVRIMHSTIQDLNAKVAYIIAENATLKTQ). The basic motif stretch occupies residues 185 to 216 (KKRARLVRNRESAQLSRQRKKHYVEELEDKVR). Residues 225–239 (LNAKVAYIIAENATL) form a leucine-zipper region.

It belongs to the bZIP family.

The protein resides in the nucleus. Binds specifically to the DNA sequence 5'-TGACG-3'. This is TGACG-sequence-specific DNA-binding protein TGA-1B (TGA1B) from Nicotiana tabacum (Common tobacco).